A 191-amino-acid polypeptide reads, in one-letter code: Ribonuclease MC (191 aa).

Residue Gln9 participates in RNA binding. Cys15 and Cys23 are joined by a disulfide. RNA-binding positions include His34, 72-73 (NV), Arg75, Phe81, 84-85 (HE), and 88-89 (KH). The active-site Proton donor is the His34. 3 disulfides stabilise this stretch: Cys48–Cys92, Cys152–Cys185, and Cys169–Cys180. Glu85 is an active-site residue. The active-site Proton acceptor is the His89.

This sequence belongs to the RNase T2 family.

The catalysed reaction is a ribonucleotidyl-ribonucleotide-RNA + H2O = a 3'-end 3'-phospho-ribonucleotide-RNA + a 5'-end dephospho-ribonucleoside-RNA + H(+). Its function is as follows. Ribonuclease cleaving preferentially the 5'-side of uridine. This Momordica charantia (Bitter gourd) protein is Ribonuclease MC.